We begin with the raw amino-acid sequence, 419 residues long: N-acylglucosamine 2-epimerase (419 aa).

The tract at residues 185 to 206 is leucine-zipper; the sequence is LLSLVEQLGEEDEELTNMYAEL. Ser-418 bears the Phosphoserine mark.

This sequence belongs to the N-acylglucosamine 2-epimerase family. Homodimer. Forms a heterodimer with renin and inhibits its activity.

The catalysed reaction is an N-acyl-D-glucosamine = an N-acyl-D-mannosamine. It participates in amino-sugar metabolism; N-acetylneuraminate degradation. Its function is as follows. Catalyzes the interconversion of N-acetylglucosamine to N-acetylmannosamine. Involved in the N-glycolylneuraminic acid (Neu5Gc) degradation pathway. This is N-acylglucosamine 2-epimerase (Renbp) from Mus musculus (Mouse).